A 395-amino-acid chain; its full sequence is Outer membrane protein assembly factor BamB (395 aa).

The signal sequence occupies residues methionine 1–alanine 20. Cysteine 21 is lipidated: N-palmitoyl cysteine. Cysteine 21 carries S-diacylglycerol cysteine lipidation.

The protein belongs to the BamB family. As to quaternary structure, part of the Bam complex.

It localises to the cell outer membrane. Its function is as follows. Part of the outer membrane protein assembly complex, which is involved in assembly and insertion of beta-barrel proteins into the outer membrane. In Shewanella oneidensis (strain ATCC 700550 / JCM 31522 / CIP 106686 / LMG 19005 / NCIMB 14063 / MR-1), this protein is Outer membrane protein assembly factor BamB.